A 475-amino-acid polypeptide reads, in one-letter code: Poly(3-hydroxyalkanoate) polymerase subunit PhaC (475 aa).

Residues 82 to 348 (PILIVYALIN…TIEFSTGHIG (267 aa)) enclose the AB hydrolase-1 domain. Catalysis depends on charge relay system residues Cys-162, Asp-317, and His-346. Residues 369 to 431 (ERSTGSEEVD…ADVDSVSGIG (63 aa)) are disordered. Residues 375–423 (EEVDIEVESPEAAEDDAVDQSELTDIDVDATDDVDADATEDDATDEPAD) are compositionally biased toward acidic residues.

The protein belongs to the PHA/PHB synthase family. Heterodimer with PhaE.

Its pathway is biopolymer metabolism; poly-(R)-3-hydroxybutanoate biosynthesis. Involved in the production of polyhydroxyalkonic acids (PHAs), which are water-insoluble biopolymers used as intracellular energy reserve material when cells grow under conditions of nutrient limitation. PHAs are composed primarily of 3-hydroxybutyric acid (3HB) and 3-hydroxyvaleric acid (3HV). Required for the production of poly-beta-hydroxybutyrate (PHB) and poly(beta-hydroxybutyrate-co-beta-hydroxyvalerate) (PHBV). The polypeptide is Poly(3-hydroxyalkanoate) polymerase subunit PhaC (phaC) (Haloarcula marismortui (strain ATCC 43049 / DSM 3752 / JCM 8966 / VKM B-1809) (Halobacterium marismortui)).